We begin with the raw amino-acid sequence, 484 residues long: Cobyric acid synthase (484 aa).

A GATase cobBQ-type domain is found at 248 to 435; it reads VLKVIVPVLP…LHGLFEGSQS (188 aa). Cysteine 329 (nucleophile) is an active-site residue. Histidine 427 is an active-site residue.

This sequence belongs to the CobB/CobQ family. CobQ subfamily.

It functions in the pathway cofactor biosynthesis; adenosylcobalamin biosynthesis. Catalyzes amidations at positions B, D, E, and G on adenosylcobyrinic A,C-diamide. NH(2) groups are provided by glutamine, and one molecule of ATP is hydrogenolyzed for each amidation. In Pseudomonas putida (strain ATCC 700007 / DSM 6899 / JCM 31910 / BCRC 17059 / LMG 24140 / F1), this protein is Cobyric acid synthase.